Consider the following 255-residue polypeptide: Small ribosomal subunit protein eS1 (255 aa).

The span at 1 to 18 (MAVGKNKRLSKGKKGLKK) shows a compositional bias: basic residues. A disordered region spans residues 1-22 (MAVGKNKRLSKGKKGLKKRAQD). N-acetylalanine; partial is present on alanine 2.

This sequence belongs to the eukaryotic ribosomal protein eS1 family. Component of the small ribosomal subunit. Mature ribosomes consist of a small (40S) and a large (60S) subunit. The 40S subunit contains about 33 different proteins and 1 molecule of RNA (18S). The 60S subunit contains about 49 different proteins and 3 molecules of RNA (25S, 5.8S and 5S).

The protein localises to the cytoplasm. The polypeptide is Small ribosomal subunit protein eS1 (Uncinocarpus reesii (strain UAMH 1704)).